We begin with the raw amino-acid sequence, 189 residues long: Sec-independent protein translocase protein TatB (189 aa).

Residues 1–21 (MFGVGIFEVLVILIVAVIALG) form a helical membrane-spanning segment. Positions 152–189 (TQKPQNSIDSINSKESSVDSLHSPSIVESTQSSSSKDS) are disordered. Residues 153-189 (QKPQNSIDSINSKESSVDSLHSPSIVESTQSSSSKDS) are compositionally biased toward polar residues.

The protein belongs to the TatB family. In terms of assembly, the Tat system comprises two distinct complexes: a TatABC complex, containing multiple copies of TatA, TatB and TatC subunits, and a separate TatA complex, containing only TatA subunits. Substrates initially bind to the TatABC complex, which probably triggers association of the separate TatA complex to form the active translocon.

The protein resides in the cell inner membrane. Functionally, part of the twin-arginine translocation (Tat) system that transports large folded proteins containing a characteristic twin-arginine motif in their signal peptide across membranes. Together with TatC, TatB is part of a receptor directly interacting with Tat signal peptides. TatB may form an oligomeric binding site that transiently accommodates folded Tat precursor proteins before their translocation. The protein is Sec-independent protein translocase protein TatB of Helicobacter hepaticus (strain ATCC 51449 / 3B1).